Here is a 327-residue protein sequence, read N- to C-terminus: Probable cell division protein WhiA (327 aa).

The segment at residues 275–308 is a DNA-binding region (H-T-H motif); that stretch reads SLEELGRLADPPMTKDAVAGRIRRLLSMADRKAK. Positions 304 to 327 are disordered; sequence DRKAKQDGIPDTESAVTPDLLEDA.

This sequence belongs to the WhiA family.

Functionally, involved in cell division and chromosome segregation. This chain is Probable cell division protein WhiA, found in Mycobacterium sp. (strain MCS).